Here is a 508-residue protein sequence, read N- to C-terminus: Photosystem II CP47 reaction center protein (508 aa).

Helical transmembrane passes span 21–36 (SVHI…WAGS), 101–115 (IVFS…IWHW), 140–156 (GIHL…FGAF), 203–218 (IAAG…FHLS), 237–252 (VLSS…AFVV), and 457–472 (SFAL…HGAR).

The protein belongs to the PsbB/PsbC family. PsbB subfamily. PSII is composed of 1 copy each of membrane proteins PsbA, PsbB, PsbC, PsbD, PsbE, PsbF, PsbH, PsbI, PsbJ, PsbK, PsbL, PsbM, PsbT, PsbX, PsbY, PsbZ, Psb30/Ycf12, at least 3 peripheral proteins of the oxygen-evolving complex and a large number of cofactors. It forms dimeric complexes. Requires Binds multiple chlorophylls. PSII binds additional chlorophylls, carotenoids and specific lipids. as cofactor.

Its subcellular location is the plastid. The protein resides in the chloroplast thylakoid membrane. One of the components of the core complex of photosystem II (PSII). It binds chlorophyll and helps catalyze the primary light-induced photochemical processes of PSII. PSII is a light-driven water:plastoquinone oxidoreductase, using light energy to abstract electrons from H(2)O, generating O(2) and a proton gradient subsequently used for ATP formation. The sequence is that of Photosystem II CP47 reaction center protein from Nuphar advena (Common spatterdock).